We begin with the raw amino-acid sequence, 1307 residues long: CRISPR-associated endonuclease Cas12a (1307 aa).

The interval 1 to 35 (MTQFEGFTNLYQVSKTLRFELIPQGKTLKHIQEQG) is WED-I (OBD-I). Residues 36–320 (FIEEDKARND…SDRNTLSFIL (285 aa)) are REC1 (helical-I). 47–51 (YKELK) contacts crRNA. Positions 74 to 106 (ENLSAAIDSYRKEKTEETRNALIEEQATYRNAI) form a coiled coil. CrRNA is bound by residues 175–176 (NR) and 307–310 (KQIL). The segment at 321–526 (EEFKSDEEVI…ARNYATKKPY (206 aa)) is WED-II (helical-II). The segment at 527-598 (SVEKFKLNFQ…GFDKMYYDYF (72 aa)) is WED-II (OBD-I). Residues 599–607 (PDAAKMIPK) constitute a DNA-binding region (PAM-binding on target DNA). The interval 599 to 718 (PDAAKMIPKC…EYYAELNPLL (120 aa)) is PI (LHD). The tract at residues 719–884 (YHISFQRIAE…ITLNYQAANS (166 aa)) is WED-III (OBD-III). 752–761 (KGHHGKPNLH) serves as a coordination point for crRNA. Residues 780-783 (KLNG) constitute a DNA-binding region (target DNA). Residue His800 is the For pre-crRNA processing of the active site. 806–808 (MLN) is a binding site for crRNA. Active-site for pre-crRNA processing residues include Lys809 and Lys860. The interval 885–940 (PSKFNQRVNAYLKEHPETPIIGIDRGERNLIYITVIDSTGKILEQRSLNTIQQFDY) is ruvC-I. The active-site For DNase activity of RuvC domain is Asp908. The segment at 941 to 957 (QKKLDNREKERVAARQA) is bridge helix. Residues 951–968 (RVAARQAWSVVGTIKDLK) constitute a DNA-binding region (target DNA). Residues 958–1066 (WSVVGTIKDL…TQSGFLFYVP (109 aa)) are ruvC-II. The For DNase activity of RuvC domain role is filled by Glu993. The target DNA DNA-binding region spans 1051 to 1053 (SFA). Positions 1067-1262 (APYTSKIDPL…FQNPEWPMDA (196 aa)) are nuclease domain. Residue Arg1226 is the For DNase activity of nuclease domain of the active site. Catalysis depends on Asp1263, which acts as the For DNase activity of RuvC domain. Residues 1263–1307 (DANGAYHIALKGQLLLNHLKESKDLKLQNGISNQDWLAYIQELRN) form a ruvC-III region.

It belongs to the CRISPR-associated endonuclease Cas12a family. In terms of assembly, monomer. The cofactor is Mg(2+).

It catalyses the reaction Endonucleolytic cleavage to 5'-phosphodinucleotide and 5'-phosphooligonucleotide end-products.. The enzyme catalyses RNA = a 5'-hydroxy-ribonucleotide + n nucleoside-2',3'-cyclophosphates.. Its function is as follows. CRISPR (clustered regularly interspaced short palindromic repeat), is an adaptive immune system that provides protection against mobile genetic elements (viruses, transposable elements and conjugative plasmids). CRISPR clusters contain sequences complementary to antecedent mobile elements and target invading nucleic acids. CRISPR clusters are transcribed and processed into CRISPR RNA (crRNA). Recognizes a short motif in the CRISPR repeat sequences (the 5' PAM or protospacer adjacent motif, TTTN in this organism) to help distinguish self versus nonself, as targets within the bacterial CRISPR locus do not have PAMs. Has dsDNA endonuclease activity, results in staggered 4-base 5' overhangs 19 and 22 bases downstream of the PAM on the non-targeted and targeted strand respectively. Non-target strand cleavage by the RuvC domain is probably a prerequisite of target strand cleavage by the Nuc domain. Protects E.coli against plasmids and bacteriophage M13mp18, phage T4 with hydroxymethyl or unmodified (but not glycosylated) cytosines and to a lesser extent against lambda and VpaE1 phage. In this CRISPR system correct processing of pre-crRNA requires only this protein and the CRISPR locus. The protein is CRISPR-associated endonuclease Cas12a of Acidaminococcus sp. (strain BV3L6).